Reading from the N-terminus, the 118-residue chain is Aspartate 1-decarboxylase 1 (118 aa).

Ser25 serves as the catalytic Schiff-base intermediate with substrate; via pyruvic acid. A Pyruvic acid (Ser) modification is found at Ser25. Residue Thr57 participates in substrate binding. The active-site Proton donor is Tyr58. 73–75 (GAA) contacts substrate.

It belongs to the PanD family. Heterooctamer of four alpha and four beta subunits. Pyruvate is required as a cofactor. Post-translationally, is synthesized initially as an inactive proenzyme, which is activated by self-cleavage at a specific serine bond to produce a beta-subunit with a hydroxyl group at its C-terminus and an alpha-subunit with a pyruvoyl group at its N-terminus.

The protein localises to the cytoplasm. It carries out the reaction L-aspartate + H(+) = beta-alanine + CO2. It participates in cofactor biosynthesis; (R)-pantothenate biosynthesis; beta-alanine from L-aspartate: step 1/1. Functionally, catalyzes the pyruvoyl-dependent decarboxylation of aspartate to produce beta-alanine. The polypeptide is Aspartate 1-decarboxylase 1 (Gloeobacter violaceus (strain ATCC 29082 / PCC 7421)).